The chain runs to 1351 residues: Alpha-latrotoxin-Lh1a (1351 aa).

An N-terminal signal peptide occupies residues 1–7; that stretch reads SLVRMRR. The interval 4–7 is furin-like endopeptidase recognition region; that stretch reads RMRR. The interval 226 to 245 is helix H8 is the probable transmembrane region of the tetrameric pore inserted in the target cell membrane; that stretch reads VLYALLYGTQTYVSVMFFLL. Residues cysteine 401 and cysteine 1054 are joined by a disulfide bond. ANK repeat units lie at residues 446-477, 478-509, 513-542, 547-577, 581-610, 614-644, 648-678, 683-711, 717-746, 750-779, 783-812, 816-846, 850-879, 883-912, 916-945, 959-991, 992-1019, 1023-1052, 1056-1085, 1089-1119, 1125-1154, and 1158-1187; these read LYNT…ATFE, QGRT…ELNQ, KGYT…SINS, FLQT…NINE, DGFT…DLNA, KGLT…DVNA, NNMT…NADV, GLLS…NVNV, GGIT…NIEQ, EKYT…NFEA, SGAT…NWRD, NGQM…VLDI, NSDT…DINT, TGHA…NVYI, DGIN…KFEW, EECA…GNFA, ICGP…DLNV, KPDT…KVNH, NGMT…DFRR, LGAT…DIDI, DKET…DMTI, and YDKT…KFRR. Residues 1184–1187 form a furin-like endopeptidase recognition region region; it reads KFRR. Positions 1188–1351 are excised as a propeptide; it reads EYKSSYGEHS…LGSVIMNSHS (164 aa).

It belongs to the cationic peptide 01 (latrotoxin) family. 03 (alpha-latrotoxin) subfamily. Homotetramer in membranes. In terms of processing, processed by furin-like proteases at both the N- and C-termini. Expressed in venom gland, cephalothorax, and abdomen tissues from both males and females.

The protein localises to the secreted. Its subcellular location is the target cell membrane. Its function is as follows. Presynaptic neurotoxin that causes massive release of neurotransmitters from vertebrate (but not invertebrate) nerve terminals and endocrine cells via a complex mechanism involving activation of receptor(s) and toxin insertion into the plasma membrane with subsequent pore formation. Binds to neurexin-1-alpha (NRXN1) in a calcium dependent manner, adhesion G protein-coupled receptor L1 (ADGRL1, also termed latrophilin-1 and calcium-independent receptor of latrotoxin (CIRL)), and receptor-type tyrosine-protein phosphatase S (PTPRS), also termed PTP sigma. NRXN1 and PTPRS are suggested to provide a platform for binding and subsequent pore formation events. In contrast, binding to ADGRL1 does not involve oligomerization and channel formation, but direct downstream stimulation of the synaptic fusion machinery. Induces rapid muscle contracture and loss of twitch tension when added to the isolated and indirectly stimulated chick biventer cervicis nerve-muscle preparation. This is Alpha-latrotoxin-Lh1a from Latrodectus hasselti (Redback spider).